Consider the following 152-residue polypeptide: Protein SprT-like (152 aa).

A SprT-like domain is found at 7-148 (QRLVEEVSLQ…GKCKGKLILI (142 aa)). Histidine 67 lines the Zn(2+) pocket. Residue glutamate 68 is part of the active site. Histidine 71 serves as a coordination point for Zn(2+).

Belongs to the SprT family. Zn(2+) is required as a cofactor.

The protein resides in the cytoplasm. The protein is Protein SprT-like of Bacillus thuringiensis subsp. konkukian (strain 97-27).